We begin with the raw amino-acid sequence, 256 residues long: MERQGLDLGLSLGLGLTTAATWPAAGFCLNSGMAEQEVIRRDDVVAATAAEDERFACSPGSPVSSGSGKRGSGSGSGDEVDDAGCDVGGGGARKKLRLSKDQAAVLEECFKTHHTLTPKQKVALAKSLNLRPRQVEVWFQNRRARTKLKQTEVDCEHLKRWCDQLADDNRRLHKELAELRALKATPTPPAAAPPLTTLTMCLSCKRVANAGVPSPAAAIFPGHPQFLCGFRDHAGAASSSYGGASSGLAKAVRAAR.

A disordered region spans residues alanine 56–aspartate 86. Low complexity predominate over residues serine 58–serine 67. The segment at residues glycine 91 to glutamine 150 is a DNA-binding region (homeobox). Residues lysine 149–proline 193 form a leucine-zipper region.

The protein belongs to the HD-ZIP homeobox family. Class II subfamily. Expressed in seedlings, roots, stems and panicles.

It localises to the nucleus. In terms of biological role, probable transcription factor. The chain is Homeobox-leucine zipper protein HOX28 (HOX28) from Oryza sativa subsp. indica (Rice).